The primary structure comprises 192 residues: A-type ATP synthase subunit E (192 aa).

The protein belongs to the V-ATPase E subunit family. Has multiple subunits with at least A(3), B(3), C, D, E, F, H, I and proteolipid K(x).

It is found in the cell membrane. In terms of biological role, component of the A-type ATP synthase that produces ATP from ADP in the presence of a proton gradient across the membrane. The polypeptide is A-type ATP synthase subunit E (Halorubrum lacusprofundi (strain ATCC 49239 / DSM 5036 / JCM 8891 / ACAM 34)).